Consider the following 247-residue polypeptide: ATP synthase subunit a, chloroplastic (247 aa).

The next 5 helical transmembrane spans lie at 38–58 (QVLI…TLAV), 95–115 (VPFI…GALL), 134–154 (INTT…AGLS), 199–219 (LVVV…VMFL), and 220–240 (GLFT…AYIG).

Belongs to the ATPase A chain family. As to quaternary structure, F-type ATPases have 2 components, CF(1) - the catalytic core - and CF(0) - the membrane proton channel. CF(1) has five subunits: alpha(3), beta(3), gamma(1), delta(1), epsilon(1). CF(0) has four main subunits: a, b, b' and c.

It is found in the plastid. The protein resides in the chloroplast thylakoid membrane. Functionally, key component of the proton channel; it plays a direct role in the translocation of protons across the membrane. This chain is ATP synthase subunit a, chloroplastic, found in Lemna minor (Common duckweed).